The primary structure comprises 282 residues: Shikimate dehydrogenase (NADP(+)) (282 aa).

Shikimate contacts are provided by residues 16–18 (SLS) and threonine 63. The active-site Proton acceptor is lysine 67. Asparagine 88 and aspartate 103 together coordinate shikimate. Residues 128-132 (GAGGA) and glycine 243 each bind NADP(+).

This sequence belongs to the shikimate dehydrogenase family. Homodimer.

It carries out the reaction shikimate + NADP(+) = 3-dehydroshikimate + NADPH + H(+). It participates in metabolic intermediate biosynthesis; chorismate biosynthesis; chorismate from D-erythrose 4-phosphate and phosphoenolpyruvate: step 4/7. Functionally, involved in the biosynthesis of the chorismate, which leads to the biosynthesis of aromatic amino acids. Catalyzes the reversible NADPH linked reduction of 3-dehydroshikimate (DHSA) to yield shikimate (SA). The sequence is that of Shikimate dehydrogenase (NADP(+)) from Xylella fastidiosa (strain Temecula1 / ATCC 700964).